An 803-amino-acid polypeptide reads, in one-letter code: Protein AMEIOTIC 1 homolog (803 aa).

2 disordered regions span residues 21–64 (RPQV…QSLS) and 264–333 (RLRQ…RWSA). Basic and acidic residues predominate over residues 39 to 50 (NGKDDANHDESK). Residues 51-64 (NQSPGLPLSRQSLS) show a composition bias toward polar residues. Residues 283–295 (KREEAESSMDKSR) show a composition bias toward basic and acidic residues. The segment covering 296-313 (AARKKKAKTYKSPKKVEK) has biased composition (basic residues). Over residues 314-333 (RRVVEAKDGDPRRGKDRWSA) the composition is skewed to basic and acidic residues. Residues 450 to 567 (VKKKVEELAE…SSFLSLKEQL (118 aa)) are a coiled coil. Residues 651-688 (ISGGGSSSCPVASGPEQLPRSSSCPSIGPGGLPPSSRA) form a disordered region.

The protein localises to the nucleus. The protein resides in the chromosome. Plays a fundamental role in building the proper chromosome structure at the beginning of meiosis in male meiocytes. Required for the transition from leptotene to zygotene in meiocytes. Required for homologous chromosome pairing. The polypeptide is Protein AMEIOTIC 1 homolog (Oryza sativa subsp. japonica (Rice)).